The primary structure comprises 155 residues: 6,7-dimethyl-8-ribityllumazine synthase (155 aa).

5-amino-6-(D-ribitylamino)uracil contacts are provided by residues tryptophan 24, 58–60 (AFE), and 82–84 (AVI). 87–88 (GT) provides a ligand contact to (2S)-2-hydroxy-3-oxobutyl phosphate. The Proton donor role is filled by histidine 90. Phenylalanine 115 lines the 5-amino-6-(D-ribitylamino)uracil pocket. (2S)-2-hydroxy-3-oxobutyl phosphate is bound at residue arginine 129.

The protein belongs to the DMRL synthase family. As to quaternary structure, forms an icosahedral capsid composed of 60 subunits, arranged as a dodecamer of pentamers.

The catalysed reaction is (2S)-2-hydroxy-3-oxobutyl phosphate + 5-amino-6-(D-ribitylamino)uracil = 6,7-dimethyl-8-(1-D-ribityl)lumazine + phosphate + 2 H2O + H(+). It participates in cofactor biosynthesis; riboflavin biosynthesis; riboflavin from 2-hydroxy-3-oxobutyl phosphate and 5-amino-6-(D-ribitylamino)uracil: step 1/2. Catalyzes the formation of 6,7-dimethyl-8-ribityllumazine by condensation of 5-amino-6-(D-ribitylamino)uracil with 3,4-dihydroxy-2-butanone 4-phosphate. This is the penultimate step in the biosynthesis of riboflavin. The sequence is that of 6,7-dimethyl-8-ribityllumazine synthase from Teredinibacter turnerae (strain ATCC 39867 / T7901).